A 483-amino-acid chain; its full sequence is Glutamate--tRNA ligase 1 (483 aa).

Residues 9 to 19 carry the 'HIGH' region motif; that stretch reads PSPTGFLHIGG. The 'KMSKS' region motif lies at 238 to 242; the sequence is KLSKR. Residue Lys-241 participates in ATP binding.

This sequence belongs to the class-I aminoacyl-tRNA synthetase family. Glutamate--tRNA ligase type 1 subfamily. In terms of assembly, monomer.

It localises to the cytoplasm. It catalyses the reaction tRNA(Glu) + L-glutamate + ATP = L-glutamyl-tRNA(Glu) + AMP + diphosphate. In terms of biological role, catalyzes the attachment of glutamate to tRNA(Glu) in a two-step reaction: glutamate is first activated by ATP to form Glu-AMP and then transferred to the acceptor end of tRNA(Glu). This chain is Glutamate--tRNA ligase 1, found in Bartonella henselae (strain ATCC 49882 / DSM 28221 / CCUG 30454 / Houston 1) (Rochalimaea henselae).